The primary structure comprises 207 residues: dTTP/UTP pyrophosphatase (207 aa).

Asp-79 acts as the Proton acceptor in catalysis.

It belongs to the Maf family. YhdE subfamily. The cofactor is a divalent metal cation.

The protein localises to the cytoplasm. It carries out the reaction dTTP + H2O = dTMP + diphosphate + H(+). The enzyme catalyses UTP + H2O = UMP + diphosphate + H(+). Nucleoside triphosphate pyrophosphatase that hydrolyzes dTTP and UTP. May have a dual role in cell division arrest and in preventing the incorporation of modified nucleotides into cellular nucleic acids. The polypeptide is dTTP/UTP pyrophosphatase (Rhodopseudomonas palustris (strain BisB5)).